Consider the following 618-residue polypeptide: DNA mismatch repair protein MutL (618 aa).

Positions 367–378 (EPTAAREPATPR) are enriched in low complexity. The disordered stretch occupies residues 367 to 402 (EPTAAREPATPRYSGGASGGNGGRQTAGGWPHAQPG). The span at 382–392 (GASGGNGGRQT) shows a compositional bias: gly residues.

This sequence belongs to the DNA mismatch repair MutL/HexB family.

Functionally, this protein is involved in the repair of mismatches in DNA. It is required for dam-dependent methyl-directed DNA mismatch repair. May act as a 'molecular matchmaker', a protein that promotes the formation of a stable complex between two or more DNA-binding proteins in an ATP-dependent manner without itself being part of a final effector complex. This is DNA mismatch repair protein MutL from Salmonella choleraesuis (strain SC-B67).